We begin with the raw amino-acid sequence, 266 residues long: MKLAHLGRQALMGVMAVALVAGMSVKSFADEGLLNKVKERGTLLVGLEGTYPPFSFQGDDGKLTGFEVEFAQQLAKHLGVEASLKPTKWDGMLASLDSKRIDVVINQVTISDERKKKYDFSTPYTISGIQALVKKGNEGTIKTADDLKGKKVGVGLGTNYEEWLRQNVQGVDVRTYDDDPTKYQDLRVGRIDAILVDRLAALDLVKKTNDTLAVTGEAFSRQESGVALRKGNEDLLKAVNDAIAEMQKDGTLQALSEKWFGADVTK.

A signal peptide spans 1-29; it reads MKLAHLGRQALMGVMAVALVAGMSVKSFA.

This sequence belongs to the bacterial solute-binding protein 3 family. As to quaternary structure, the complex is composed of two ATP-binding proteins (TcyN), two transmembrane proteins (TcyL) and a solute-binding protein (TcyJ).

The protein resides in the periplasm. In terms of biological role, part of the ABC transporter complex TcyJLN involved in L-cystine import. Binds cystine. The sequence is that of L-cystine-binding protein TcyJ from Escherichia coli O6:H1 (strain CFT073 / ATCC 700928 / UPEC).